A 60-amino-acid polypeptide reads, in one-letter code: Cytotoxin 1 (60 aa).

4 disulfides stabilise this stretch: C3/C21, C14/C38, C42/C53, and C54/C59.

Belongs to the three-finger toxin family. Short-chain subfamily. Type IA cytotoxin sub-subfamily. As to quaternary structure, monomer in solution; Homodimer and oligomer in the presence of negatively charged lipids forming a pore with a size ranging between 20 and 30 Angstroms. In terms of tissue distribution, expressed by the venom gland.

Its subcellular location is the secreted. The protein resides in the target cell membrane. Its function is as follows. Shows cytolytic activity on many different cells by forming pore in lipid membranes. In vivo, increases heart rate or kills the animal by cardiac arrest. In addition, it binds to heparin with high affinity, interacts with Kv channel-interacting protein 1 (KCNIP1) in a calcium-independent manner, and binds to integrin alpha-V/beta-3 (ITGAV/ITGB3) with moderate affinity. The chain is Cytotoxin 1 from Naja melanoleuca (Forest cobra).